We begin with the raw amino-acid sequence, 311 residues long: Aspartate carbamoyltransferase catalytic subunit (311 aa).

2 residues coordinate carbamoyl phosphate: R59 and T60. L-aspartate is bound at residue K87. The carbamoyl phosphate site is built by R109, H139, and Q142. The L-aspartate site is built by R172 and R224. Carbamoyl phosphate contacts are provided by A265 and P266.

The protein belongs to the aspartate/ornithine carbamoyltransferase superfamily. ATCase family. In terms of assembly, heterododecamer (2C3:3R2) of six catalytic PyrB chains organized as two trimers (C3), and six regulatory PyrI chains organized as three dimers (R2).

The catalysed reaction is carbamoyl phosphate + L-aspartate = N-carbamoyl-L-aspartate + phosphate + H(+). It participates in pyrimidine metabolism; UMP biosynthesis via de novo pathway; (S)-dihydroorotate from bicarbonate: step 2/3. In terms of biological role, catalyzes the condensation of carbamoyl phosphate and aspartate to form carbamoyl aspartate and inorganic phosphate, the committed step in the de novo pyrimidine nucleotide biosynthesis pathway. The protein is Aspartate carbamoyltransferase catalytic subunit of Streptococcus pyogenes serotype M12 (strain MGAS2096).